The primary structure comprises 344 residues: C-C chemokine receptor-like 2 (344 aa).

The Extracellular portion of the chain corresponds to 1-43 (MANYTLAPEDEYDVLIEGELESDEAEQCDRYDTWALSAQLVPS). An N-linked (GlcNAc...) asparagine glycan is attached at Asn-3. Residues 44–64 (LCSAVFVVGVLDNLLVVLILV) traverse the membrane as a helical segment. The Cytoplasmic segment spans residues 65–74 (KYKGLKRVEN). A helical membrane pass occupies residues 75-95 (IYLLNLAVSNLCFLLTLPFWA). Topologically, residues 96-104 (HAGGDPMCK) are extracellular. Cys-103 and Cys-181 are disulfide-bonded. The helical transmembrane segment at 105-125 (ILIGLYFVGLYSETFFNCLLT) threads the bilayer. Topologically, residues 126 to 148 (LQRYLVFLHKGNFFSVRRRVPCG) are cytoplasmic. The helical transmembrane segment at 149–169 (IVTSAVAWVTAILATVPEFAV) threads the bilayer. At 170–198 (YKPQMEDPKYKCAFSRTPFLPADETFWKH) the chain is on the extracellular side. The helical transmembrane segment at 199-219 (FLTLKMNVSVLVFPLFIFTFL) threads the bilayer. The Cytoplasmic segment spans residues 220–238 (YVQMRKTLRFGEQRYSLFK). A helical membrane pass occupies residues 239–259 (LVFAIMVVFLLMWAPYNIALF). Over 260–281 (LSTFKEHFSLSDCKSNYNLDKS) the chain is Extracellular. The chain crosses the membrane as a helical span at residues 282–302 (VLITKLIATTHCCVNPLLYVF). At 303 to 344 (LDGTFRKYLCRFFHRRSNTPRQPRRRFAQGTSREEPDRSTEV) the chain is on the cytoplasmic side. Residues 323–344 (RQPRRRFAQGTSREEPDRSTEV) are disordered. The span at 334-344 (SREEPDRSTEV) shows a compositional bias: basic and acidic residues.

Belongs to the G-protein coupled receptor 1 family.

It localises to the cell membrane. Functionally, receptor for CCL19 and chemerin/RARRES2. Does not appear to be a signaling receptor, but may have a role in modulating chemokine-triggered immune responses by capturing and internalizing CCL19 or by presenting RARRES2 ligand to CMKLR1, a functional signaling receptor. Plays a critical role for the development of Th2 responses. The polypeptide is C-C chemokine receptor-like 2 (CCRL2) (Macaca mulatta (Rhesus macaque)).